A 339-amino-acid chain; its full sequence is Chromo domain-containing protein cec-3 (339 aa).

The interval M1–D21 is disordered. A Chromo domain is found at F24–L84. Positions Q91–K105 are enriched in basic residues. Disordered stretches follow at residues Q91–S199 and E215–L272. Composition is skewed to basic and acidic residues over residues T106–D117 and A171–L183. Acidic residues predominate over residues D184–E193. Residues K230 to S241 are compositionally biased toward basic and acidic residues. The span at E242 to V251 shows a compositional bias: low complexity.

Expressed in every cell of the embryo (at protein level). In adults, expressed predominantly in the head region and the germline.

The protein localises to the chromosome. It is found in the nucleus. Its function is as follows. Specifically recognizes and binds methylated 'Lys-9' of histone H3 (H3K9me), with highest preference for trimethylated 'Lys-9' (H3K9me3) followed by dimethylated 'Lys-9' (H3K9me2) followed by monomethylated 'Lys-9' (H3K9me1). Plays a role in maintaining correct unc-4 expression in the VC motor neurons where unc-4 is expressed in the vulval but not in the non-vulval VC neurons. The protein is Chromo domain-containing protein cec-3 (cec-3) of Caenorhabditis elegans.